We begin with the raw amino-acid sequence, 477 residues long: SH3 domain-binding protein 5 homolog (477 aa).

Positions 12 to 95 form a coiled coil; it reads QIQIELENLN…AAVKFQRANE (84 aa). A phosphoserine mark is found at serine 113 and serine 115. A coiled-coil region spans residues 122–221; it reads NAWQEMLNHA…YSTALRNLER (100 aa). Disordered stretches follow at residues 224-258 and 276-306; these read EDIHRQRGDFPTPPGPREPGVGAELNSPTSSALPS and GSQMSLGAKTPQAAAETEDEEDACDYDETGA. Residues 291–305 show a composition bias toward acidic residues; that stretch reads ETEDEEDACDYDETG.

It belongs to the SH3BP5 family.

This is SH3 domain-binding protein 5 homolog (pcs) from Drosophila melanogaster (Fruit fly).